The sequence spans 203 residues: DNA-directed RNA polymerase subunit gamma (203 aa).

C34, C36, C49, and C52 together coordinate Zn(2+).

It belongs to the RNA polymerase beta' chain family. RpoC1 subfamily. In cyanobacteria the RNAP catalytic core is composed of 2 alpha, 1 beta, 1 beta', 1 gamma and 1 omega subunit. When a sigma factor is associated with the core the holoenzyme is formed, which can initiate transcription. Zn(2+) is required as a cofactor.

The catalysed reaction is RNA(n) + a ribonucleoside 5'-triphosphate = RNA(n+1) + diphosphate. DNA-dependent RNA polymerase catalyzes the transcription of DNA into RNA using the four ribonucleoside triphosphates as substrates. The polypeptide is DNA-directed RNA polymerase subunit gamma (rpoC1) (Fischerella muscicola).